The sequence spans 322 residues: DNA primase small subunit PriS (322 aa).

Residues Asp-86, Asp-88, and Asp-226 contribute to the active site.

Belongs to the eukaryotic-type primase small subunit family. In terms of assembly, heterodimer of a small subunit (PriS) and a large subunit (PriL). It depends on Mg(2+) as a cofactor. Mn(2+) serves as cofactor.

Functionally, catalytic subunit of DNA primase, an RNA polymerase that catalyzes the synthesis of short RNA molecules used as primers for DNA polymerase during DNA replication. The small subunit contains the primase catalytic core and has DNA synthesis activity on its own. Binding to the large subunit stabilizes and modulates the activity, increasing the rate of DNA synthesis while decreasing the length of the DNA fragments, and conferring RNA synthesis capability. The DNA polymerase activity may enable DNA primase to also catalyze primer extension after primer synthesis. May also play a role in DNA repair. This chain is DNA primase small subunit PriS, found in Thermoplasma acidophilum (strain ATCC 25905 / DSM 1728 / JCM 9062 / NBRC 15155 / AMRC-C165).